Consider the following 563-residue polypeptide: Coiled-coil domain-containing protein 38 (563 aa).

Coiled-coil stretches lie at residues 129 to 212, 384 to 415, and 485 to 522; these read KRNT…KTEF, NIEF…RSRL, and ERMK…AVAQ. The tract at residues 521–550 is disordered; that stretch reads AQPKKKLGRRLVYHSKPPSANKQQLPLVNE. Over residues 523 to 533 the composition is skewed to basic residues; it reads PKKKLGRRLVY.

Interacts with CCDC42, CFAP53, IFT88 and ODF2. Interacts with CCDC146. Interacts with TEKT3. Interacts with ubiquitinated histone H2A.

It is found in the cytoplasm. It localises to the cytoskeleton. The protein localises to the microtubule organizing center. The protein resides in the centrosome. Its subcellular location is the perinuclear region. It is found in the cell projection. It localises to the cilium. The protein localises to the flagellum. Essential for male fertility. Required for sperm flagellum biogenesis. Also required for acrosome biogenesis. Required for the attachment of developing acrosomes to the nucleus during spermiogenesis and may be involved in the transport of fibrous sheath components. In Macaca fascicularis (Crab-eating macaque), this protein is Coiled-coil domain-containing protein 38 (CCDC38).